A 778-amino-acid polypeptide reads, in one-letter code: NAD-dependent deacetylase sir2B (778 aa).

ANK repeat units lie at residues 83 to 112 (LNWTPLHVAVSNKSIEVVTLLLERNIEISI), 114 to 142 (RYTAFHIAACNGDLNIIEKMITMNRVPNG), 148 to 178 (DMETSLFLSITNNHFEISEKIMDYYQSSMNS), 191 to 221 (HGVSPLIMSVLRKNLKMIKKLIEEGDADINS), 225 to 255 (DNSTSLHCAAIIDFTEAIEYLLDIGGIELMN), 260 to 289 (YGNSPIHEAAIKGNFKSIQTFINQLKKIII), 317 to 354 (DGSTPLHLCCNCVNSDNIENNLKSCKVLIEEGGVQVNG), 358 to 390 (GNATALHILACVGEDKSLPLVKYFLSIGSDPTI), and 394 to 423 (YGWTPIHQAYNNKNIQIYQLLLDHLKLTNS). The disordered stretch occupies residues 438–458 (SSTSTSSSSSSSSSSSSSSSS). One can recognise a Deacetylase sirtuin-type domain in the interval 465–778 (KEELKLKGIE…DYFNTLFNSF (314 aa)). The Proton acceptor role is filled by His-608. Zn(2+) contacts are provided by Cys-616, Cys-619, Cys-642, and Cys-647. Residues 727–746 (KLKQQQENESGESSNDNDNN) form a disordered region. Residues 733 to 746 (ENESGESSNDNDNN) are compositionally biased toward low complexity.

The protein belongs to the sirtuin family. Requires Zn(2+) as cofactor.

It carries out the reaction N(6)-acetyl-L-lysyl-[protein] + NAD(+) + H2O = 2''-O-acetyl-ADP-D-ribose + nicotinamide + L-lysyl-[protein]. NAD-dependent deacetylase, which plays an important role in the regulation of transcriptional repression. In Dictyostelium discoideum (Social amoeba), this protein is NAD-dependent deacetylase sir2B (sir2B).